A 204-amino-acid chain; its full sequence is Small ribosomal subunit protein uS4 (204 aa).

Positions 25–45 (AVPSRRAYPPGQHGQARKKRS) are disordered. The region spanning 92–152 (MRLDNIIFRL…NKENSRRLAE (61 aa)) is the S4 RNA-binding domain.

Belongs to the universal ribosomal protein uS4 family. In terms of assembly, part of the 30S ribosomal subunit. Contacts protein S5. The interaction surface between S4 and S5 is involved in control of translational fidelity.

Functionally, one of the primary rRNA binding proteins, it binds directly to 16S rRNA where it nucleates assembly of the body of the 30S subunit. Its function is as follows. With S5 and S12 plays an important role in translational accuracy. The polypeptide is Small ribosomal subunit protein uS4 (Cyanothece sp. (strain PCC 7425 / ATCC 29141)).